We begin with the raw amino-acid sequence, 93 residues long: uncharacterized protein (93 aa).

A disordered region spans residues 41–62 (RSANRIPTTSSTSTSGTIPTTT). The span at 46–62 (IPTTSSTSTSGTIPTTT) shows a compositional bias: low complexity.

This is an uncharacterized protein from Dictyostelium discoideum (Social amoeba).